The chain runs to 502 residues: ATP synthase subunit alpha (502 aa).

169 to 176 contributes to the ATP binding site; the sequence is GDRQTGKT.

It belongs to the ATPase alpha/beta chains family. As to quaternary structure, F-type ATPases have 2 components, CF(1) - the catalytic core - and CF(0) - the membrane proton channel. CF(1) has five subunits: alpha(3), beta(3), gamma(1), delta(1), epsilon(1). CF(0) has three main subunits: a(1), b(2) and c(9-12). The alpha and beta chains form an alternating ring which encloses part of the gamma chain. CF(1) is attached to CF(0) by a central stalk formed by the gamma and epsilon chains, while a peripheral stalk is formed by the delta and b chains.

It is found in the cell membrane. The catalysed reaction is ATP + H2O + 4 H(+)(in) = ADP + phosphate + 5 H(+)(out). Produces ATP from ADP in the presence of a proton gradient across the membrane. The alpha chain is a regulatory subunit. The polypeptide is ATP synthase subunit alpha (Streptococcus pyogenes serotype M12 (strain MGAS9429)).